Here is a 1694-residue protein sequence, read N- to C-terminus: Immunoglobulin A1 protease autotransporter (1694 aa).

An N-terminal signal peptide occupies residues 1-25 (MLNKKFKLNFIALTVAYALTPYTEA). The region spanning 26-332 (ALVRDDVDYQ…NIYKPEFAKT (307 aa)) is the Peptidase S6 domain. Residue S288 is part of the active site. The tract at residues 991–1403 (VEKRNQTVDT…GSDRSTVALR (413 aa)) is disordered. Positions 997 to 1021 (TVDTTNITTPNNIQADVPSVPSNNE) are enriched in polar residues. Positions 1037–1047 (TPSETTETVAE) are enriched in low complexity. Residues 1049-1061 (SKQESKTVEKNEQ) show a composition bias toward basic and acidic residues. Residues 1082-1095 (KANTQTNEVAQSGS) are compositionally biased toward polar residues. 2 stretches are compositionally biased toward basic and acidic residues: residues 1104–1124 (EIKETAKVEKEEKAKVEKDEI) and 1142–1154 (APKEVSTDTKVEE). Composition is skewed to polar residues over residues 1155 to 1178 (TQVQAQPQTQSTTVAAAEATSPNS) and 1199 to 1210 (VSKNQTENTTDQ). Residues 1211–1226 (PTEREKTAKVETEKTQ) are compositionally biased toward basic and acidic residues. 3 stretches are compositionally biased toward polar residues: residues 1227–1247 (EPPQVASQASPKQEQSETVQP), 1255–1297 (NVPT…TAIT), and 1308–1336 (TETAASTEDASQHKANTVADNSVANNSES). Residues 1352-1370 (ETSAEETTAASTDETTIAD) are compositionally biased toward low complexity. Over residues 1374–1384 (RSKPNRRSRRS) the composition is skewed to basic residues. An Autotransporter domain is found at 1442–1694 (NNEGQYNVWV…TAELKLSFSF (253 aa)).

It localises to the periplasm. It is found in the secreted. The protein localises to the cell surface. The protein resides in the cell outer membrane. The enzyme catalyses Cleavage of immunoglobulin A molecules at certain Pro-|-Xaa bonds in the hinge region. No small molecule substrates are known.. Its function is as follows. Virulence factor; cleaves host immunoglobulin A producing intact Fc and Fab fragments. This Haemophilus influenzae (strain ATCC 51907 / DSM 11121 / KW20 / Rd) protein is Immunoglobulin A1 protease autotransporter (iga).